Here is a 203-residue protein sequence, read N- to C-terminus: Ribosome maturation factor RimP (203 aa).

Residues 1 to 21 (MSDSEATTSTDRSESNSTATI) are compositionally biased toward polar residues. A disordered region spans residues 1 to 23 (MSDSEATTSTDRSESNSTATIHN).

The protein belongs to the RimP family.

Its subcellular location is the cytoplasm. Required for maturation of 30S ribosomal subunits. The sequence is that of Ribosome maturation factor RimP from Paenarthrobacter aurescens (strain TC1).